A 165-amino-acid polypeptide reads, in one-letter code: Chorismate pyruvate-lyase (165 aa).

Residues Met35, Arg77, Leu115, and Glu156 each contribute to the substrate site.

Belongs to the UbiC family. In terms of assembly, monomer.

It is found in the cytoplasm. It carries out the reaction chorismate = 4-hydroxybenzoate + pyruvate. The protein operates within cofactor biosynthesis; ubiquinone biosynthesis. Its function is as follows. Removes the pyruvyl group from chorismate, with concomitant aromatization of the ring, to provide 4-hydroxybenzoate (4HB) for the ubiquinone pathway. The polypeptide is Chorismate pyruvate-lyase (Escherichia coli (strain K12 / MC4100 / BW2952)).